The primary structure comprises 69 residues: Cecropin-like peptide 1 (69 aa).

The first 23 residues, 1 to 23 (MNFTKLFVVFAVVLVAFAGQSEA), serve as a signal peptide directing secretion. Glutamine 68 bears the Glutamine amide mark.

Following bacterial infection, expressed in fat body, trachea and muscle.

The protein localises to the secreted. Functionally, antimicrobial peptide active against Gram-negative bacteria E.coli KCCM 11234 (MIC&lt;=1.03 uM), E.aerogenes KCCM 12177 (MIC&lt;=2.07 uM) and P.aeruginosa KCCM 11328 (MIC&lt;=2.07 uM). Not active against various Gram-positive bacteria at concentrations up to 4.14 uM. This is Cecropin-like peptide 1 from Hermetia illucens (Black soldier fly).